Reading from the N-terminus, the 383-residue chain is Sphingosine kinase 1 (383 aa).

Positions 12–159 constitute a DAGKc domain; sequence PRPCRVLVLL…MNLLSLHTAS (148 aa). ATP contacts are provided by residues 22–24 and 54–58; these read NPR and TERQN. Residue 79–82 participates in substrate binding; sequence SGDG. Asp81 serves as the catalytic Proton donor/acceptor. ATP contacts are provided by residues Glu86 and 111–113; that span reads GSG. 2 consecutive short sequence motifs (nuclear export signal) follow at residues 147–155 and 161–169; these read LSPMNLLSL and RQLYSVLSL. Asp178 contributes to the substrate binding site. Arg185 and Arg191 together coordinate ATP. Thr193 carries the post-translational modification Phosphothreonine. Ser225 is modified (phosphoserine). 340–342 provides a ligand contact to ATP; that stretch reads DGE. Residues 363-383 are disordered; it reads GSSDSPSGRDSQRRPPPEEPI. The segment covering 372–383 has biased composition (basic and acidic residues); the sequence is DSQRRPPPEEPI.

In terms of assembly, interacts with ACY1. Binds to calmodulin. Interacts with SPHKAP. Interacts with CIB1, the interaction occurs in a calcium-dependent manner. Interacts with TRAF2. Interacts with EEF1A1; the interaction enhances SPHK1 kinase activity. It depends on Mg(2+) as a cofactor. As to expression, expressed in microglia (at protein level).

The protein resides in the cytoplasm. Its subcellular location is the nucleus. It localises to the cell membrane. It is found in the endosome membrane. The protein localises to the membrane. The protein resides in the clathrin-coated pit. Its subcellular location is the synapse. The catalysed reaction is a sphingoid base + ATP = a sphingoid 1-phosphate + ADP + H(+). The enzyme catalyses L-seryl-[protein] + acetyl-CoA = O-acetyl-L-seryl-[protein] + CoA. It catalyses the reaction sphinganine + ATP = sphinganine 1-phosphate + ADP + H(+). It carries out the reaction sphing-4-enine + ATP = sphing-4-enine 1-phosphate + ADP + H(+). The catalysed reaction is 1-O-hexadecyl-2-amino-sn-glycerol + ATP = 1-O-hexadecyl-2-desoxy-2-amino-sn-glycero-3-phosphate + ADP + H(+). Its activity is regulated as follows. Acetyltransferase activity increases in presence of the kinase substrate, sphingosine. In Purkinje cells, kinase activity on sphingosine increases in presence of VEGFA. In neurons, kinase activity increases during the first 24h in presence of Amyloid-beta protein 42 to decrease after 96h. Its function is as follows. Catalyzes the phosphorylation of sphingosine to form sphingosine 1-phosphate (SPP), a lipid mediator with both intra- and extracellular functions. Also acts on D-erythro-sphingosine and to a lesser extent sphinganine, but not other lipids, such as D,L-threo-dihydrosphingosine, N,N-dimethylsphingosine, diacylglycerol, ceramide, or phosphatidylinositol. In contrast to proapoptotic SPHK2, has a negative effect on intracellular ceramide levels, enhances cell growth and inhibits apoptosis. Involved in the regulation of inflammatory response and neuroinflammation. Via the product sphingosine 1-phosphate, stimulates TRAF2 E3 ubiquitin ligase activity, and promotes activation of NF-kappa-B in response to TNF signaling leading to IL17 secretion. In response to TNF and in parallel to NF-kappa-B activation, negatively regulates RANTES induction through p38 MAPK signaling pathway. Involved in endocytic membrane trafficking induced by sphingosine, recruited to dilate endosomes, also plays a role on later stages of endosomal maturation and membrane fusion independently of its kinase activity. In Purkinje cells, seems to be also involved in the regulation of autophagosome-lysosome fusion upon VEGFA. Functionally, has serine acetyltransferase activity on PTGS2/COX2 in an acetyl-CoA dependent manner. The acetyltransferase activity increases in presence of the kinase substrate, sphingosine. During neuroinflammation, through PTGS2 acetylation, promotes neuronal secretion of specialized preresolving mediators (SPMs), especially 15-R-lipoxin A4, which results in an increase of phagocytic microglia. In Rattus norvegicus (Rat), this protein is Sphingosine kinase 1 (Sphk1).